The sequence spans 274 residues: MEALRQRIEAAFEARAEITPNSVEPSVRADVEKAISMLDKGEARVAEKIDGQWHVHQWLKKAVLLSFRIFDNGVIDGGETKYFDKVPMKFADYDEARFKEEAIRVVPPATVRKGSFIGKNTVLMPSYVNLGAYVDEGTMVDTWATVGSCAQIGKNVHLSGGVGIGGVLEPLQAGPTIIEDNCFIGARSEVVEGVIVEEGSVISMGVYLGQSTRIYDRETGEVHYGRVPAGSVVVSGTLPSKCGTYNLYAAIIVKKVDAKTRGKVGINELLRIVD.

Residues Arg104 and Asp141 each contribute to the substrate site.

It belongs to the transferase hexapeptide repeat family. Homotrimer.

It is found in the cytoplasm. The enzyme catalyses (S)-2,3,4,5-tetrahydrodipicolinate + succinyl-CoA + H2O = (S)-2-succinylamino-6-oxoheptanedioate + CoA. It participates in amino-acid biosynthesis; L-lysine biosynthesis via DAP pathway; LL-2,6-diaminopimelate from (S)-tetrahydrodipicolinate (succinylase route): step 1/3. The protein is 2,3,4,5-tetrahydropyridine-2,6-dicarboxylate N-succinyltransferase of Shewanella sediminis (strain HAW-EB3).